The following is a 108-amino-acid chain: Nucleoid-associated protein BPP1222 (108 aa).

The interval 86 to 108 (TSQEKMASVTAGMPLPPGMKLPF) is disordered. Residues 99–108 (PLPPGMKLPF) are compositionally biased toward pro residues.

The protein belongs to the YbaB/EbfC family. Homodimer.

Its subcellular location is the cytoplasm. The protein localises to the nucleoid. Functionally, binds to DNA and alters its conformation. May be involved in regulation of gene expression, nucleoid organization and DNA protection. The sequence is that of Nucleoid-associated protein BPP1222 from Bordetella parapertussis (strain 12822 / ATCC BAA-587 / NCTC 13253).